The sequence spans 301 residues: Sulfate adenylyltransferase subunit 2 (301 aa).

Residues 278-301 form a disordered region; that stretch reads ERQGRLIDGDEPASMERKKREGYF.

Belongs to the PAPS reductase family. CysD subfamily. In terms of assembly, sulfate-activating enzymes, NodP and NodQ, may be physically associated.

It catalyses the reaction sulfate + ATP + H(+) = adenosine 5'-phosphosulfate + diphosphate. Proposed to provide activated sulfate for transfer to nod factor. This chain is Sulfate adenylyltransferase subunit 2 (nodP), found in Azospirillum brasilense.